The primary structure comprises 293 residues: Ribosomal RNA small subunit methyltransferase H (293 aa).

S-adenosyl-L-methionine is bound by residues 34–36 (GGH), Asp-54, Leu-86, Asp-101, and Gln-108.

The protein belongs to the methyltransferase superfamily. RsmH family.

It localises to the cytoplasm. The enzyme catalyses cytidine(1402) in 16S rRNA + S-adenosyl-L-methionine = N(4)-methylcytidine(1402) in 16S rRNA + S-adenosyl-L-homocysteine + H(+). Specifically methylates the N4 position of cytidine in position 1402 (C1402) of 16S rRNA. The protein is Ribosomal RNA small subunit methyltransferase H of Elusimicrobium minutum (strain Pei191).